A 315-amino-acid polypeptide reads, in one-letter code: Methionyl-tRNA formyltransferase (315 aa).

113–116 contacts (6S)-5,6,7,8-tetrahydrofolate; the sequence is SILP.

It belongs to the Fmt family.

It catalyses the reaction L-methionyl-tRNA(fMet) + (6R)-10-formyltetrahydrofolate = N-formyl-L-methionyl-tRNA(fMet) + (6S)-5,6,7,8-tetrahydrofolate + H(+). In terms of biological role, attaches a formyl group to the free amino group of methionyl-tRNA(fMet). The formyl group appears to play a dual role in the initiator identity of N-formylmethionyl-tRNA by promoting its recognition by IF2 and preventing the misappropriation of this tRNA by the elongation apparatus. This chain is Methionyl-tRNA formyltransferase, found in Aliivibrio fischeri (strain ATCC 700601 / ES114) (Vibrio fischeri).